The primary structure comprises 130 residues: UPF0102 protein RSc3265 (130 aa).

It belongs to the UPF0102 family.

This chain is UPF0102 protein RSc3265, found in Ralstonia nicotianae (strain ATCC BAA-1114 / GMI1000) (Ralstonia solanacearum).